Here is a 504-residue protein sequence, read N- to C-terminus: ATP synthase subunit alpha, chloroplastic (504 aa).

An ATP-binding site is contributed by 170 to 177 (GDRQTGKT).

Belongs to the ATPase alpha/beta chains family. As to quaternary structure, F-type ATPases have 2 components, CF(1) - the catalytic core - and CF(0) - the membrane proton channel. CF(1) has five subunits: alpha(3), beta(3), gamma(1), delta(1), epsilon(1). CF(0) has four main subunits: a, b, b' and c.

Its subcellular location is the plastid. It is found in the chloroplast thylakoid membrane. The catalysed reaction is ATP + H2O + 4 H(+)(in) = ADP + phosphate + 5 H(+)(out). Its function is as follows. Produces ATP from ADP in the presence of a proton gradient across the membrane. The alpha chain is a regulatory subunit. This Ostreococcus tauri protein is ATP synthase subunit alpha, chloroplastic.